The sequence spans 237 residues: ATP-dependent dethiobiotin synthetase BioD (237 aa).

21 to 26 (GVGKTV) provides a ligand contact to ATP. Thr-25 contributes to the Mg(2+) binding site. Lys-48 is an active-site residue. Thr-52 contacts substrate. ATP-binding positions include Asp-56, 117-120 (EALG), 177-178 (SC), and 209-211 (PYL). Residues Asp-56 and Glu-117 each coordinate Mg(2+).

It belongs to the dethiobiotin synthetase family. In terms of assembly, homodimer. It depends on Mg(2+) as a cofactor.

The protein resides in the cytoplasm. It carries out the reaction (7R,8S)-7,8-diammoniononanoate + CO2 + ATP = (4R,5S)-dethiobiotin + ADP + phosphate + 3 H(+). The enzyme catalyses (7R,8S)-8-amino-7-(carboxyamino)nonanoate + ATP = (4R,5S)-dethiobiotin + ADP + phosphate + H(+). It participates in cofactor biosynthesis; biotin biosynthesis; biotin from 7,8-diaminononanoate: step 1/2. Its function is as follows. Catalyzes a mechanistically unusual reaction, the ATP-dependent insertion of CO2 between the N7 and N8 nitrogen atoms of 7,8-diaminopelargonic acid (DAPA, also called 7,8-diammoniononanoate) to form a ureido ring. This cyanobacterium does not encode bioA (which catalyzes the formation of the precursor for this reaction in the cannonical pathway), instead it encodes bioU, which replaces bioA and also performs the first half of the cannonical BioD reaction. Thus in this bacteria BioD has a different substrate. In Synechocystis replacement of bioU by bioA from E.coli leads to biotin synthesis, showing BioD can use the 'cannonical' 7,8-diammoniononanoate as a substrate. This chain is ATP-dependent dethiobiotin synthetase BioD, found in Synechocystis sp. (strain ATCC 27184 / PCC 6803 / Kazusa).